The following is a 725-amino-acid chain: Putative coiled-coil domain-containing protein 144B (725 aa).

The span at 1–11 shows a compositional bias: basic and acidic residues; the sequence is MASWGGEKRGG. 5 disordered regions span residues 1-25, 87-188, 213-260, 453-485, and 528-586; these read MASWGGEKRGGAEGSPKLAVYATRK, AARS…NLTE, LPEN…DCDR, NMNQNSDSGSTNNYKSLKPKLENLSSLPPDSDR, and EEEM…KVKN. Polar residues-rich tracts occupy residues 129-150 and 165-178; these read PESLPQNNNPDWHPTNLTLSDE and PSVSPSMPENQSAT. Residues 215 to 244 adopt a coiled-coil conformation; it reads ENKESKEAEQDLELTSEEEQERLKGCENKQ. Positions 224–234 are enriched in acidic residues; it reads QDLELTSEEEQ. Positions 453-467 are enriched in polar residues; that stretch reads NMNQNSDSGSTNNYK. Residues 490–546 are a coiled coil; that stretch reads YLHEELQQDMQKFKNEVNTLEEEFLALKKENVQLHKEVEEEMEKHRSNSTELSGTLT. The span at 528-537 shows a compositional bias: basic and acidic residues; that stretch reads EEEMEKHRSN. Residues 543 to 552 are compositionally biased toward low complexity; that stretch reads GTLTDGTTVG. A compositionally biased stretch (basic and acidic residues) spans 563 to 583; sequence PRKENEEHDRPADKTANEKNK. The stretch at 648–713 forms a coiled coil; sequence LLKLKNNHCD…ALKQENGRKE (66 aa).

It belongs to the CCDC144 family.

The sequence is that of Putative coiled-coil domain-containing protein 144B from Homo sapiens (Human).